A 492-amino-acid chain; its full sequence is MTFRGDTAVLVLAAGPGSRMRSDTPKVLHTIAGRSMLSHSLHAITKLAPQHLVVVLGHEHQRIAPLVAELADTLERTIDVALQDRPRGTGHAVFCGLSALPDDYGGIVVVTSGDTPLLDANTLAELIATHNATSAAVTVLTTTFSDPLGYGRILRTQDNEVMAIIEHADASPSQREIREVNAGVYAFDITALRSALIRLNSNNTQQELYLTDVISILRREGQKVNAQHIDDNALVAGVNNRVQLAELSAELNRRIVATHQVAGVTIIDPATTWIDIDVTIGNDTVIHPGTQLLGRTQIGECCVIGPDTTLTDVLVSQRATVVRTHGTSSTIGAGAMVGPFTYLRPGTVLGTKGKLGAFVETKNSTIGTGAKVPHLTYVGDADIGEHSNIGASSVFVNYDGTAKQRTTIGSHVRTGSDTKFVAPVTVGDGAYTGAGTVVRNDVPPGALAVSVSPQRNIENWVQRKRPGSAAAQAAEKASTRTGKQSQQKSEPD.

Residues 1-241 (MTFRGDTAVL…NALVAGVNNR (241 aa)) are pyrophosphorylase. UDP-N-acetyl-alpha-D-glucosamine is bound by residues 12-15 (LAAG), Lys-26, Gln-83, 88-89 (GT), 112-114 (SGD), Gly-151, Glu-166, Asn-181, and Asn-239. Asp-114 is a Mg(2+) binding site. Asn-239 contributes to the Mg(2+) binding site. The linker stretch occupies residues 242-262 (VQLAELSAELNRRIVATHQVA). The N-acetyltransferase stretch occupies residues 263–492 (GVTIIDPATT…KQSQQKSEPD (230 aa)). Positions 344 and 362 each coordinate UDP-N-acetyl-alpha-D-glucosamine. The active-site Proton acceptor is the His-374. Residues Tyr-377 and Asn-388 each coordinate UDP-N-acetyl-alpha-D-glucosamine. Acetyl-CoA contacts are provided by residues Ala-391, 397–398 (NY), Ser-416, and Ala-434. The tract at residues 461–492 (VQRKRPGSAAAQAAEKASTRTGKQSQQKSEPD) is disordered. Polar residues predominate over residues 479-492 (TRTGKQSQQKSEPD).

The protein in the N-terminal section; belongs to the N-acetylglucosamine-1-phosphate uridyltransferase family. In the C-terminal section; belongs to the transferase hexapeptide repeat family. In terms of assembly, homotrimer. It depends on Mg(2+) as a cofactor.

The protein localises to the cytoplasm. It carries out the reaction alpha-D-glucosamine 1-phosphate + acetyl-CoA = N-acetyl-alpha-D-glucosamine 1-phosphate + CoA + H(+). The catalysed reaction is N-acetyl-alpha-D-glucosamine 1-phosphate + UTP + H(+) = UDP-N-acetyl-alpha-D-glucosamine + diphosphate. Its pathway is nucleotide-sugar biosynthesis; UDP-N-acetyl-alpha-D-glucosamine biosynthesis; N-acetyl-alpha-D-glucosamine 1-phosphate from alpha-D-glucosamine 6-phosphate (route II): step 2/2. It functions in the pathway nucleotide-sugar biosynthesis; UDP-N-acetyl-alpha-D-glucosamine biosynthesis; UDP-N-acetyl-alpha-D-glucosamine from N-acetyl-alpha-D-glucosamine 1-phosphate: step 1/1. The protein operates within bacterial outer membrane biogenesis; LPS lipid A biosynthesis. Functionally, catalyzes the last two sequential reactions in the de novo biosynthetic pathway for UDP-N-acetylglucosamine (UDP-GlcNAc). The C-terminal domain catalyzes the transfer of acetyl group from acetyl coenzyme A to glucosamine-1-phosphate (GlcN-1-P) to produce N-acetylglucosamine-1-phosphate (GlcNAc-1-P), which is converted into UDP-GlcNAc by the transfer of uridine 5-monophosphate (from uridine 5-triphosphate), a reaction catalyzed by the N-terminal domain. This chain is Bifunctional protein GlmU, found in Mycobacterium leprae (strain Br4923).